The chain runs to 749 residues: Basic juvenile hormone-suppressible protein 2 (749 aa).

The first 14 residues, 1 to 14 (MRAVLLFVVSLAAL), serve as a signal peptide directing secretion.

This sequence belongs to the hemocyanin family. Fat body, and hemolymph of larvae.

This is Basic juvenile hormone-suppressible protein 2 (BJSP-2) from Trichoplusia ni (Cabbage looper).